We begin with the raw amino-acid sequence, 75 residues long: Small ribosomal subunit protein bS18 (75 aa).

The protein belongs to the bacterial ribosomal protein bS18 family. In terms of assembly, part of the 30S ribosomal subunit. Forms a tight heterodimer with protein bS6.

Functionally, binds as a heterodimer with protein bS6 to the central domain of the 16S rRNA, where it helps stabilize the platform of the 30S subunit. The sequence is that of Small ribosomal subunit protein bS18 from Shewanella denitrificans (strain OS217 / ATCC BAA-1090 / DSM 15013).